Here is a 151-residue protein sequence, read N- to C-terminus: 6,7-dimethyl-8-ribityllumazine synthase (151 aa).

5-amino-6-(D-ribitylamino)uracil contacts are provided by residues Phe23, 55–57 (AYE), and 79–81 (AVI). 84-85 (AT) provides a ligand contact to (2S)-2-hydroxy-3-oxobutyl phosphate. Catalysis depends on His87, which acts as the Proton donor. Residue Phe111 coordinates 5-amino-6-(D-ribitylamino)uracil. Arg125 contributes to the (2S)-2-hydroxy-3-oxobutyl phosphate binding site.

It belongs to the DMRL synthase family.

It catalyses the reaction (2S)-2-hydroxy-3-oxobutyl phosphate + 5-amino-6-(D-ribitylamino)uracil = 6,7-dimethyl-8-(1-D-ribityl)lumazine + phosphate + 2 H2O + H(+). Its pathway is cofactor biosynthesis; riboflavin biosynthesis; riboflavin from 2-hydroxy-3-oxobutyl phosphate and 5-amino-6-(D-ribitylamino)uracil: step 1/2. Catalyzes the formation of 6,7-dimethyl-8-ribityllumazine by condensation of 5-amino-6-(D-ribitylamino)uracil with 3,4-dihydroxy-2-butanone 4-phosphate. This is the penultimate step in the biosynthesis of riboflavin. This is 6,7-dimethyl-8-ribityllumazine synthase from Leptospira interrogans serogroup Icterohaemorrhagiae serovar Lai (strain 56601).